The following is a 308-amino-acid chain: Oxygen-dependent coproporphyrinogen-III oxidase (308 aa).

S100 provides a ligand contact to substrate. A divalent metal cation is bound by residues H104 and H114. Residue H114 is the Proton donor of the active site. 116 to 118 (NFR) lines the substrate pocket. The a divalent metal cation site is built by H153 and H183. The tract at residues 248–283 (YVEFNLVFDRGTIFGLQSGGRTESILSSMPPMASWR) is important for dimerization. 266–268 (GGR) provides a ligand contact to substrate.

It belongs to the aerobic coproporphyrinogen-III oxidase family. Homodimer. A divalent metal cation serves as cofactor.

It is found in the cytoplasm. The enzyme catalyses coproporphyrinogen III + O2 + 2 H(+) = protoporphyrinogen IX + 2 CO2 + 2 H2O. Its pathway is porphyrin-containing compound metabolism; protoporphyrin-IX biosynthesis; protoporphyrinogen-IX from coproporphyrinogen-III (O2 route): step 1/1. In terms of biological role, involved in the heme biosynthesis. Catalyzes the aerobic oxidative decarboxylation of propionate groups of rings A and B of coproporphyrinogen-III to yield the vinyl groups in protoporphyrinogen-IX. The protein is Oxygen-dependent coproporphyrinogen-III oxidase of Francisella tularensis subsp. novicida (strain U112).